A 509-amino-acid chain; its full sequence is Subtelomeric hrmA-associated cluster protein AFUA_5G14880 (509 aa).

In terms of biological role, part of the subtelomeric hrmA-associated cluster (HAC) containing genes that alter the hyphal surface (such as reduced total chitin or increased beta-glucan exposure) and perturb inter-hyphal interactions within the developing biofilms, resulting in a loss of vertically aligned polarized growing filaments. Consequently, this hypoxia-typic morphotype (called H-MORPH) with altered biofilm architecture leads to increased hypoxia fitness, increased host inflammation, rapid disease progression, and mortality in a murine model of invasive aspergillosis. This is Subtelomeric hrmA-associated cluster protein AFUA_5G14880 from Aspergillus fumigatus (strain ATCC MYA-4609 / CBS 101355 / FGSC A1100 / Af293) (Neosartorya fumigata).